The sequence spans 152 residues: MANLERTFIAIKPDGVQRGLVGEIIKRFEQKGFRLVAMKFLRASEEHLKQHYIDLKDRPFFPGLVKYMNSGPVVAMVWEGLNVVKTGRVMLGETNPADSKPGTIRGDFCIQVGRNIIHGSDSVESAEKEIHLWFKPEELIDYKSCAHDWVYE.

Positions 1–66 are interaction with AKAP13; it reads MANLERTFIA…DRPFFPGLVK (66 aa). Residues Lys-12, Phe-60, Arg-88, Thr-94, Arg-105, and Asn-115 each contribute to the ATP site. His-118 serves as the catalytic Pros-phosphohistidine intermediate.

It belongs to the NDK family. Hexamer of two different chains: An and B (A6, A5B, A4B2, A3B3, A2B4, AB5, B6). Interacts with CAPN8. Interacts with AKAP13. Interacts with ITGB1BP1 (via C-terminal domain region). Interacts with BCL2L10. Requires Mg(2+) as cofactor. In terms of tissue distribution, expressed in the base region of the oxyntic and pyloric mucosae.

The protein resides in the cytoplasm. It is found in the cell projection. It localises to the lamellipodium. Its subcellular location is the ruffle. The protein localises to the nucleus. It carries out the reaction a 2'-deoxyribonucleoside 5'-diphosphate + ATP = a 2'-deoxyribonucleoside 5'-triphosphate + ADP. The enzyme catalyses a ribonucleoside 5'-diphosphate + ATP = a ribonucleoside 5'-triphosphate + ADP. The catalysed reaction is ATP + protein L-histidine = ADP + protein N-phospho-L-histidine.. Its function is as follows. Major role in the synthesis of nucleoside triphosphates other than ATP. The ATP gamma phosphate is transferred to the NDP beta phosphate via a ping-pong mechanism, using a phosphorylated active-site intermediate. Negatively regulates Rho activity by interacting with AKAP13/LBC. Acts as a transcriptional activator of the MYC gene; binds DNA non-specifically. Binds to both single-stranded guanine- and cytosine-rich strands within the nuclease hypersensitive element (NHE) III(1) region of the MYC gene promoter. Does not bind to duplex NHE III(1). Has G-quadruplex (G4) DNA-binding activity, which is independent of its nucleotide-binding and kinase activity. Binds both folded and unfolded G4 with similar low nanomolar affinities. Stabilizes folded G4s regardless of whether they are prefolded or not. Exhibits histidine protein kinase activity. The protein is Nucleoside diphosphate kinase B (Nme2) of Mus musculus (Mouse).